Consider the following 475-residue polypeptide: Endoglucanase A (475 aa).

An N-terminal signal peptide occupies residues 1-26 (MKKTTAFLLCFLMIFTALLPMQNANA). Residue His-147 is part of the active site. Glu-195 serves as the catalytic Proton donor. Glu-332 (nucleophile) is an active-site residue. The 66-residue stretch at 409 to 474 (PVIVYGDYNN…LLGMVSKLPS (66 aa)) folds into the Dockerin domain.

It belongs to the glycosyl hydrolase 5 (cellulase A) family.

It carries out the reaction Endohydrolysis of (1-&gt;4)-beta-D-glucosidic linkages in cellulose, lichenin and cereal beta-D-glucans.. Its function is as follows. The biological conversion of cellulose to glucose generally requires three types of hydrolytic enzymes: (1) Endoglucanases which cut internal beta-1,4-glucosidic bonds; (2) Exocellobiohydrolases that cut the disaccharide cellobiose from the non-reducing end of the cellulose polymer chain; (3) Beta-1,4-glucosidases which hydrolyze the cellobiose and other short cello-oligosaccharides to glucose. The chain is Endoglucanase A (celCCA) from Ruminiclostridium cellulolyticum (strain ATCC 35319 / DSM 5812 / JCM 6584 / H10) (Clostridium cellulolyticum).